Consider the following 273-residue polypeptide: MSDMHSLLIAAILGVVEGLTEFLPVSSTGHMIIVGHLLGFEGDTAKTFEVVIQLGSILAVVVMFWRRLFGLIGIHFGRPLQHEGESKGRLTLIHILLGMIPAVVLGLLFHDTIKSLFNPINVMYALVVGGLLLIAAECLKPKEPRAPGLDDMTYRQAFMIGCFQCLALWPGFSRSGATISGGMLMGVSRYAASEFSFLLAVPMMMGATALDLYKSWGFLTTGDIPMFAVGFITAFVVALIAIKTFLQLIKRISFIPFAIYRFIVAAAVYVVFF.

Transmembrane regions (helical) follow at residues S6 to S26, A45 to W65, L90 to H110, L116 to A136, Y190 to L210, G222 to I242, and I252 to F272.

Belongs to the UppP family.

The protein resides in the cell inner membrane. It carries out the reaction di-trans,octa-cis-undecaprenyl diphosphate + H2O = di-trans,octa-cis-undecaprenyl phosphate + phosphate + H(+). Catalyzes the dephosphorylation of undecaprenyl diphosphate (UPP). Confers resistance to bacitracin. The protein is Undecaprenyl-diphosphatase of Escherichia coli O139:H28 (strain E24377A / ETEC).